The following is an 89-amino-acid chain: MAHKKAGGSSRNGRDSESKRLGVKKFGGESVIAGNIIVRQRGTRWHPGDNVGIGKDHTLFALSEGKVSFQRKAGNRSYVSVIPMVEAAE.

The segment at M1–G22 is disordered.

The protein belongs to the bacterial ribosomal protein bL27 family.

This chain is Large ribosomal subunit protein bL27, found in Bartonella tribocorum (strain CIP 105476 / IBS 506).